A 277-amino-acid polypeptide reads, in one-letter code: Putative thiosulfate sulfurtransferase mpst-4 (277 aa).

2 Rhodanese domains span residues 15–153 (NFGN…VVQS) and 155–243 (SKAE…QHLN). The active-site Cysteine persulfide intermediate is cysteine 204.

It catalyses the reaction thiosulfate + hydrogen cyanide = thiocyanate + sulfite + 2 H(+). The protein is Putative thiosulfate sulfurtransferase mpst-4 of Caenorhabditis elegans.